Here is a 61-residue protein sequence, read N- to C-terminus: uncharacterized protein (61 aa).

At 1–20 (MSSTTSTINLSSLGSAINDV) the chain is on the extracellular side. A helical membrane pass occupies residues 21 to 41 (LNIIVQYLPVFVTVAVLFGII). The Cytoplasmic segment spans residues 42–61 (TYMTGGLGGLFSGITGIFGS).

Its subcellular location is the host membrane. This is an uncharacterized protein from Acidianus filamentous virus 2 (isolate Italy/Pozzuoli) (AFV-2).